The sequence spans 506 residues: ATP synthase subunit alpha, mitochondrial (506 aa).

171–178 (GDRQTGKT) is a binding site for ATP.

Belongs to the ATPase alpha/beta chains family. As to quaternary structure, F-type ATPases have 2 components, CF(1) - the catalytic core - and CF(0) - the membrane proton channel. CF(1) has five subunits: alpha(3), beta(3), gamma(1), delta(1), epsilon(1). CF(0) has three main subunits: a, b and c.

The protein resides in the mitochondrion. It is found in the mitochondrion inner membrane. In terms of biological role, mitochondrial membrane ATP synthase (F(1)F(0) ATP synthase or Complex V) produces ATP from ADP in the presence of a proton gradient across the membrane which is generated by electron transport complexes of the respiratory chain. F-type ATPases consist of two structural domains, F(1) - containing the extramembraneous catalytic core, and F(0) - containing the membrane proton channel, linked together by a central stalk and a peripheral stalk. During catalysis, ATP synthesis in the catalytic domain of F(1) is coupled via a rotary mechanism of the central stalk subunits to proton translocation. Subunits alpha and beta form the catalytic core in F(1). Rotation of the central stalk against the surrounding alpha(3)beta(3) subunits leads to hydrolysis of ATP in three separate catalytic sites on the beta subunits. Subunit alpha does not bear the catalytic high-affinity ATP-binding sites. The chain is ATP synthase subunit alpha, mitochondrial (ATPA) from Beta vulgaris (Sugar beet).